Reading from the N-terminus, the 71-residue chain is Large ribosomal subunit protein bL31 (71 aa).

Zn(2+) contacts are provided by C16, C18, C36, and C39.

This sequence belongs to the bacterial ribosomal protein bL31 family. Type A subfamily. In terms of assembly, part of the 50S ribosomal subunit. Zn(2+) serves as cofactor.

In terms of biological role, binds the 23S rRNA. This is Large ribosomal subunit protein bL31 from Petrotoga mobilis (strain DSM 10674 / SJ95).